A 213-amino-acid chain; its full sequence is Holliday junction resolvase RecU (213 aa).

Residues Thr99, Asp101, Glu114, and Gln133 each coordinate Mg(2+).

Belongs to the RecU family. Requires Mg(2+) as cofactor.

Its subcellular location is the cytoplasm. It carries out the reaction Endonucleolytic cleavage at a junction such as a reciprocal single-stranded crossover between two homologous DNA duplexes (Holliday junction).. In terms of biological role, endonuclease that resolves Holliday junction intermediates in genetic recombination. Cleaves mobile four-strand junctions by introducing symmetrical nicks in paired strands. Promotes annealing of linear ssDNA with homologous dsDNA. Required for DNA repair, homologous recombination and chromosome segregation. This is Holliday junction resolvase RecU from Lactococcus lactis subsp. cremoris (strain MG1363).